The following is a 346-amino-acid chain: Small ribosomal subunit biogenesis GTPase RsgA (346 aa).

The interval 1 to 26 is disordered; sequence MAKRKLTQNQTRRIQSNNAKTLHRHK. Residues 7-20 show a composition bias toward polar residues; that stretch reads TQNQTRRIQSNNAK. The region spanning 103 to 271 is the CP-type G domain; sequence ENEISRPDYY…LIDSPGIREF (169 aa). Residues 159–162 and 213–221 contribute to the GTP site; these read NKVD and GQSGVGKSS. 4 residues coordinate Zn(2+): Cys-295, Cys-300, His-302, and Cys-308.

Belongs to the TRAFAC class YlqF/YawG GTPase family. RsgA subfamily. Monomer. Associates with 30S ribosomal subunit, binds 16S rRNA. Zn(2+) serves as cofactor.

It localises to the cytoplasm. Its function is as follows. One of several proteins that assist in the late maturation steps of the functional core of the 30S ribosomal subunit. Helps release RbfA from mature subunits. May play a role in the assembly of ribosomal proteins into the subunit. Circularly permuted GTPase that catalyzes slow GTP hydrolysis, GTPase activity is stimulated by the 30S ribosomal subunit. This chain is Small ribosomal subunit biogenesis GTPase RsgA, found in Haemophilus influenzae (strain PittEE).